Consider the following 149-residue polypeptide: Small ribosomal subunit protein uS11z (149 aa).

Residues 130–149 (VTPVPTDSTRRKGGRRGRRL) are disordered. Residues 140-149 (RKGGRRGRRL) show a composition bias toward basic residues.

It belongs to the universal ribosomal protein uS11 family.

The chain is Small ribosomal subunit protein uS11z from Zea mays (Maize).